We begin with the raw amino-acid sequence, 238 residues long: Sugar fermentation stimulation protein homolog (238 aa).

This sequence belongs to the SfsA family.

The chain is Sugar fermentation stimulation protein homolog from Vibrio vulnificus (strain CMCP6).